A 294-amino-acid polypeptide reads, in one-letter code: Putative pyruvate, phosphate dikinase regulatory protein (294 aa).

156 to 163 lines the ADP pocket; it reads GVSRSGKT.

It belongs to the pyruvate, phosphate/water dikinase regulatory protein family. PDRP subfamily.

The enzyme catalyses N(tele)-phospho-L-histidyl/L-threonyl-[pyruvate, phosphate dikinase] + ADP = N(tele)-phospho-L-histidyl/O-phospho-L-threonyl-[pyruvate, phosphate dikinase] + AMP + H(+). It carries out the reaction N(tele)-phospho-L-histidyl/O-phospho-L-threonyl-[pyruvate, phosphate dikinase] + phosphate + H(+) = N(tele)-phospho-L-histidyl/L-threonyl-[pyruvate, phosphate dikinase] + diphosphate. In terms of biological role, bifunctional serine/threonine kinase and phosphorylase involved in the regulation of the pyruvate, phosphate dikinase (PPDK) by catalyzing its phosphorylation/dephosphorylation. The chain is Putative pyruvate, phosphate dikinase regulatory protein from Cutibacterium acnes (strain DSM 16379 / KPA171202) (Propionibacterium acnes).